The primary structure comprises 325 residues: MSFGKKEYWEDWVLEEEDEVFKIMKAAYDAGIRTFDTANIYSAGVSEELVGKFIRKYEIPRSSIVIMSKCFSPVRKDLIKLYMDLSSRGVQLHDSPELANQCGLSRKHIFDAVQDSVKRLGTYIDVLQIHRYDPHVSAEEVMRALNDVVESGKVRYIGASTMRYYQFIELQNTAEKHGWHKFISMQNYHNLLYREEEREMIPYCQKTGVGLIPWSPLARGLLTRSIDANEETIRSKTDLYTRALEFGAGYKAILSRVEELAKKYNVSMATLATAWSLHKGDYPIVGISKVERLQDALASVTLKLNEEDIKYLEEPYCPVPIQGEI.

This sequence belongs to the aldo/keto reductase family. Aldo/keto reductase 2 subfamily.

The chain is Putative aryl-alcohol dehydrogenase C750.01 from Schizosaccharomyces pombe (strain 972 / ATCC 24843) (Fission yeast).